Here is a 250-residue protein sequence, read N- to C-terminus: MSGHSKWATTKHKKAVIDAKRGKLFAKLIKNIEVAARMGGVDIEGNPTLYDAIQKAKKQSVPNKNIDSAVKRGGGLEAGGADYETIMYEGYGPNGVAVLIECLTDNRNRAASDVRVAMTRNGGSMADPGSVSYLFNRKGVVIVPKGELAEDDVLGAVLDAGAEEVNDLGESFEVLSEATDLVAVRTALQEAGIDYESADANFVPTMQVELDEEGARKIFRLIDALEDSDDVQNVFANFDVSDEIMEKVDA.

This sequence belongs to the TACO1 family.

It localises to the cytoplasm. The sequence is that of Probable transcriptional regulatory protein SCO1521 from Streptomyces coelicolor (strain ATCC BAA-471 / A3(2) / M145).